Reading from the N-terminus, the 1253-residue chain is Cytoplasmic FMR1-interacting protein 1 (1253 aa).

Phosphoserine is present on serine 583. An EIF4E-binding region spans residues 724 to 732 (DKRLRSECK). Threonine 1234 bears the Phosphothreonine mark.

Belongs to the CYFIP family. In terms of assembly, component of the WAVE1 complex composed of ABI2, CYFIP1 or CYFIP2, BRK1, NCKAP1 and WASF1/WAVE1. Within the complex, a heterodimer containing NCKAP1 and CYFIP1 interacts with a heterotrimer formed by WAVE1, ABI2 and BRK1. Component of the CYFIP1-EIF4E-FMR1 complex which is composed of CYFIP, EIF4E and FMR1. Interacts with FMR1 but does not bind to related proteins FXR1 or FXR2. Interaction with EIF4E stimulates FMR1 binding. Component of the WAVE2 complex composed of ABI1, CYFIP1/SRA1, NCKAP1/NAP1 (NCKAP1L/HEM1 in hematopoietic cells) and WASF2/WAVE2. Interacts with the active GTP-bound form of RAC1. Interacts through its C-terminus with the C-terminus of DPYSL2/CRMP2 which is necessary for DPYSL2-induced axon outgrowth. Interacts with NYAP1, NYAP2 and MYO16. Interacts with TMEM108 (via N-terminus); the interaction associates TMEM108 with the WAVE1 complex. As to expression, highly expressed in embryonic and adult developing nervous system.

It localises to the cytoplasm. Its subcellular location is the perinuclear region. The protein resides in the cell projection. The protein localises to the lamellipodium. It is found in the ruffle. It localises to the synapse. Its subcellular location is the synaptosome. Component of the CYFIP1-EIF4E-FMR1 complex which binds to the mRNA cap and mediates translational repression. In the CYFIP1-EIF4E-FMR1 complex this subunit is an adapter between EIF4E and FMR1. Promotes the translation repression activity of FMR1 in brain probably by mediating its association with EIF4E and mRNA. Regulates formation of membrane ruffles and lamellipodia. Plays a role in axon outgrowth. Binds to F-actin but not to RNA. Part of the WAVE complex that regulates actin filament reorganization via its interaction with the Arp2/3 complex. Actin remodeling activity is regulated by RAC1. Regulator of epithelial morphogenesis. May act as an invasion suppressor in cancers. As component of the WAVE1 complex, required for BDNF-NTRK2 endocytic trafficking and signaling from early endosomes. The chain is Cytoplasmic FMR1-interacting protein 1 from Mus musculus (Mouse).